We begin with the raw amino-acid sequence, 125 residues long: U11-myrmicitoxin-Ta1a (125 aa).

The signal sequence occupies residues M1 to G21. The propeptide occupies E22–A91. A disulfide bridge connects residues C101 and C124.

The protein belongs to the formicidae venom precursor-01 superfamily. In terms of tissue distribution, expressed by the venom gland.

Its subcellular location is the secreted. It localises to the target cell membrane. In terms of biological role, neurotoxin that causes irreversible rapid flaccid paralysis in blowflies and honeybees upon intrathoracic injection. Causes a quick and irreversible cytolytic effect (at 10 uM) indicating it possibly acts as a pore-forming peptide. Shows only weak effect on aphids (A.pisum) at high doses 24 hours post intrathoracic injection. In vitro, is not cytotoxic on the dipteran S2 Drosophila embryonic cell line. The polypeptide is U11-myrmicitoxin-Ta1a (Tetramorium africanum (Fierce ant)).